The primary structure comprises 390 residues: S-adenosylmethionine synthase (390 aa).

Glu-12 serves as a coordination point for Mg(2+). An ATP-binding site is contributed by His-18. Glu-46 is a K(+) binding site. Residues Glu-59 and Gln-102 each contribute to the L-methionine site. ATP contacts are provided by residues 170 to 172 (DGK), 238 to 241 (SGRF), Asp-249, 255 to 256 (RK), Ala-272, Lys-276, and Lys-280. Residue Asp-249 participates in L-methionine binding. Residue Lys-280 coordinates L-methionine.

It belongs to the AdoMet synthase family. In terms of assembly, homotetramer. The cofactor is Mn(2+). It depends on Mg(2+) as a cofactor. Co(2+) is required as a cofactor. K(+) serves as cofactor.

It is found in the cytoplasm. It catalyses the reaction L-methionine + ATP + H2O = S-adenosyl-L-methionine + phosphate + diphosphate. It participates in amino-acid biosynthesis; S-adenosyl-L-methionine biosynthesis; S-adenosyl-L-methionine from L-methionine: step 1/1. Catalyzes the formation of S-adenosylmethionine from methionine and ATP. The reaction comprises two steps that are both catalyzed by the same enzyme: formation of S-adenosylmethionine (AdoMet) and triphosphate, and subsequent hydrolysis of the triphosphate. This is S-adenosylmethionine synthase (METM) from Chlamydomonas reinhardtii (Chlamydomonas smithii).